Here is a 491-residue protein sequence, read N- to C-terminus: Glycogen synthase 2 (491 aa).

Residue K16 coordinates ADP-alpha-D-glucose.

This sequence belongs to the glycosyltransferase 1 family. Bacterial/plant glycogen synthase subfamily.

It carries out the reaction [(1-&gt;4)-alpha-D-glucosyl](n) + ADP-alpha-D-glucose = [(1-&gt;4)-alpha-D-glucosyl](n+1) + ADP + H(+). Its pathway is glycan biosynthesis; glycogen biosynthesis. Functionally, synthesizes alpha-1,4-glucan chains using ADP-glucose. This chain is Glycogen synthase 2, found in Nitrosococcus oceani (strain ATCC 19707 / BCRC 17464 / JCM 30415 / NCIMB 11848 / C-107).